The primary structure comprises 1168 residues: Carbamoyl phosphate synthase arginine-specific large chain, mitochondrial (1168 aa).

Residues 1 to 51 (MLSTVHKAGRAPALLRHGRRVPVQASQLRALTSGAQNTSIFQTQANAAQRL) constitute a mitochondrion transit peptide. Residues 86 to 483 (RDHVDVKKVL…SFQKAIRQVD (398 aa)) form a carboxyphosphate synthetic domain region. ATP-binding positions include arginine 213, 243–298 (ANKI…WKEV), arginine 253, glycine 259, glycine 260, lysine 290, leucine 292, glutamate 297, glycine 323, isoleucine 324, histidine 325, glutamine 366, and glutamate 380. The ATP-grasp 1 domain maps to 217–409 (AKALEEINIP…LAYTAAKIGL (193 aa)). The Mg(2+) site is built by glutamine 366, glutamate 380, and asparagine 382. Positions 366, 380, and 382 each coordinate Mn(2+). Residues 484-628 (PRFVGFQGDK…YTTYNASSHD (145 aa)) are oligomerization domain. Residues 629–1017 (VTFEDKGTVI…AYWASLQSAM (389 aa)) are carbamoyl phosphate synthetic domain. The ATP-grasp 2 domain maps to 754–951 (SEILDSIGVD…FIDAATKALV (198 aa)). ATP contacts are provided by residues 780–837 (AEEV…AQEI), arginine 790, lysine 829, isoleucine 831, glutamate 836, glycine 861, valine 862, histidine 863, serine 864, glutamine 904, and glutamate 922. Mg(2+) is bound by residues glutamine 904, glutamate 922, and asparagine 924. Residues glutamine 904, glutamate 922, and asparagine 924 each coordinate Mn(2+). The tract at residues 1018–1152 (NFRVPEPGEG…AEKLPRPEGI (135 aa)) is allosteric domain. Residues 1019-1168 (FRVPEPGEGL…WSEFIGGKPL (150 aa)) enclose the MGS-like domain.

Belongs to the CarB family. As to quaternary structure, heterodimer composed of 2 chains; the small (or glutamine) chain promotes the hydrolysis of glutamine to ammonia, which is used by the large (or ammonia) chain to synthesize carbamoyl phosphate. Requires Mg(2+) as cofactor. It depends on Mn(2+) as a cofactor.

Its subcellular location is the mitochondrion matrix. It catalyses the reaction hydrogencarbonate + L-glutamine + 2 ATP + H2O = carbamoyl phosphate + L-glutamate + 2 ADP + phosphate + 2 H(+). The enzyme catalyses hydrogencarbonate + NH4(+) + 2 ATP = carbamoyl phosphate + 2 ADP + phosphate + 2 H(+). Its pathway is amino-acid biosynthesis; L-arginine biosynthesis; carbamoyl phosphate from bicarbonate: step 1/1. Functionally, large subunit of the arginine-specific carbamoyl phosphate synthase (CPSase). CPSase catalyzes the formation of carbamoyl phosphate from the ammonia moiety of glutamine, hydrogencarbonate, and phosphate donated by ATP, the first step of the arginine biosynthetic pathway. The large subunit (synthetase) binds the substrates ammonia (free or transferred from glutamine from the small subunit), hydrogencarbonate and ATP and carries out an ATP-coupled ligase reaction, activating hydrogencarbonate by forming carboxy phosphate which reacts with ammonia to form carbamoyl phosphate. This is Carbamoyl phosphate synthase arginine-specific large chain, mitochondrial (arg-3) from Neurospora crassa (strain ATCC 24698 / 74-OR23-1A / CBS 708.71 / DSM 1257 / FGSC 987).